The primary structure comprises 116 residues: Large ribosomal subunit protein uL18 (116 aa).

The protein belongs to the universal ribosomal protein uL18 family. Part of the 50S ribosomal subunit; part of the 5S rRNA/L5/L18/L25 subcomplex. Contacts the 5S and 23S rRNAs.

Functionally, this is one of the proteins that bind and probably mediate the attachment of the 5S RNA into the large ribosomal subunit, where it forms part of the central protuberance. The chain is Large ribosomal subunit protein uL18 from Acinetobacter baumannii (strain AB307-0294).